A 964-amino-acid chain; its full sequence is Insulin receptor substrate 1 (964 aa).

The 102-residue stretch at 8–109 (GMALSGNLKK…WLDKLLVLQR (102 aa)) folds into the PH domain. Residues 122–236 (YDQVWQVVIQ…SAMSAKTESN (115 aa)) enclose the IRS-type PTB domain. Residues 249–268 (LSHEPMRKRSSSANEASKPI) are disordered. Ser-286, Ser-287, and Ser-342 each carry phosphoserine. Phosphotyrosine; by INSR is present on Tyr-410. Positions 410–413 (YIPM) match the YXXM motif 1 motif. The interval 527–560 (ASNRSQSSIGKEGSSYGSSANRQKKSTSAPLLSL) is disordered. Over residues 528-560 (SNRSQSSIGKEGSSYGSSANRQKKSTSAPLLSL) the composition is skewed to polar residues. Position 554 is a phosphoserine (Ser-554). Residues 640–643 (YLEM) carry the YXXM motif 2 motif. Positions 698-712 (EKWREQPSRSEEKKS) are enriched in basic and acidic residues. Positions 698–735 (EKWREQPSRSEEKKSNSPLNDNPFSLKPTNVESKSKSH) are disordered. Over residues 713-729 (NSPLNDNPFSLKPTNVE) the composition is skewed to polar residues. Tyr-907 carries the phosphotyrosine; by INSR modification. The tract at residues 921 to 964 (AKYLKRGSRESPPVSACPEDGNTYARIDFDQSDSSSSSSNIFNT) is disordered. Phosphoserine occurs at positions 928 and 931. Residue Tyr-944 is modified to Phosphotyrosine; by INSR. Over residues 952–964 (SDSSSSSSNIFNT) the composition is skewed to low complexity.

Bindings to phosphatidylinositol 3-kinase and SHP2.

Functionally, activates phosphatidylinositol 3-kinase when bound to the regulatory p85 subunit. May mediate the control of various cellular processes by insulin-like peptides. When phosphorylated by the insulin receptor binds specifically to various cellular proteins containing SH2 domains. Involved in control of cell proliferation, cell size, and body and organ growth throughout development. Also has a role in a signaling pathway controlling the physiological response required to endure periods of low nutrient conditions. Insulin/insulin-like growth factor (IGF) signaling pathway has a role in regulating aging and is necessary in the ovary for vitellogenic maturation. The sequence is that of Insulin receptor substrate 1 from Drosophila sechellia (Fruit fly).